The sequence spans 441 residues: Ribulose bisphosphate carboxylase large chain (441 aa).

Positions 89 and 139 each coordinate substrate. Residue lysine 141 is the Proton acceptor of the active site. Lysine 143 lines the substrate pocket. Lysine 167, aspartate 169, and glutamate 170 together coordinate Mg(2+). Residue lysine 167 is modified to N6-carboxylysine. The active-site Proton acceptor is the histidine 260. The substrate site is built by residue 261 and serine 345.

This sequence belongs to the RuBisCO large chain family. Type I subfamily. In terms of assembly, heterohexadecamer of 8 large chains and 8 small chains; disulfide-linked. The disulfide link is formed within the large subunit homodimers. Mg(2+) serves as cofactor. In terms of processing, the disulfide bond which can form in the large chain dimeric partners within the hexadecamer appears to be associated with oxidative stress and protein turnover.

Its subcellular location is the plastid. The protein localises to the chloroplast. It catalyses the reaction 2 (2R)-3-phosphoglycerate + 2 H(+) = D-ribulose 1,5-bisphosphate + CO2 + H2O. The enzyme catalyses D-ribulose 1,5-bisphosphate + O2 = 2-phosphoglycolate + (2R)-3-phosphoglycerate + 2 H(+). Its function is as follows. RuBisCO catalyzes two reactions: the carboxylation of D-ribulose 1,5-bisphosphate, the primary event in carbon dioxide fixation, as well as the oxidative fragmentation of the pentose substrate in the photorespiration process. Both reactions occur simultaneously and in competition at the same active site. This is Ribulose bisphosphate carboxylase large chain from Asclepias exaltata (Poke milkweed).